A 179-amino-acid chain; its full sequence is MSRIGRLPIPVPAGVDVTIDGRTVTVKGPRGTLTHTIAEPITVEKAEDGTLHVRRPDDENRTRGLHGLTRTLIANMITGVTQGFAKTLEIVGTGYRVQARGSDLEFALGFSHPVVVRPPEGISFEVQTPTRFVVHGIDKQKVGEVAANIRKLRKPEPYKGKGVRYQGENVRRKVGKAGK.

The protein belongs to the universal ribosomal protein uL6 family. In terms of assembly, part of the 50S ribosomal subunit.

This protein binds to the 23S rRNA, and is important in its secondary structure. It is located near the subunit interface in the base of the L7/L12 stalk, and near the tRNA binding site of the peptidyltransferase center. This is Large ribosomal subunit protein uL6 from Acidothermus cellulolyticus (strain ATCC 43068 / DSM 8971 / 11B).